We begin with the raw amino-acid sequence, 321 residues long: Transmembrane protein 255A (321 aa).

4 consecutive transmembrane segments (helical) span residues 29-49, 56-76, 88-108, and 200-220; these read VFVTVTLLIVSSLIFTLGMAA, VTVGGYYPGVILGFGSILGII, LVASIVFISFGVIAAFCCAIV, and TILNIVGLFLGIITAAVLGGF. Residues 279 to 297 show a composition bias toward polar residues; it reads STPSGLSDDPNGQASSFMW. Positions 279–300 are disordered; sequence STPSGLSDDPNGQASSFMWPSN.

Belongs to the TMEM255 family.

The protein localises to the membrane. The sequence is that of Transmembrane protein 255A (tmem255a) from Xenopus laevis (African clawed frog).